A 313-amino-acid chain; its full sequence is 3'-5' exoribonuclease YhaM (313 aa).

The segment at residues 22 to 90 (SSVKGTASNG…QLKIRQIRQA (69 aa)) is a DNA-binding region (OB). The 117-residue stretch at 163 to 279 (HVVSMLRLAK…LHQIDLMDAS (117 aa)) folds into the HD domain.

Belongs to the YhaM family.

Its function is as follows. Shows a 3'-5' exoribonuclease activity. This chain is 3'-5' exoribonuclease YhaM, found in Listeria monocytogenes serovar 1/2a (strain ATCC BAA-679 / EGD-e).